The primary structure comprises 121 residues: Small ribosomal subunit protein uS13 (121 aa).

A disordered region spans residues 93–121 (RGLPMRGQRTRTNARTRKGPRKGAAALKK).

It belongs to the universal ribosomal protein uS13 family. As to quaternary structure, part of the 30S ribosomal subunit. Forms a loose heterodimer with protein S19. Forms two bridges to the 50S subunit in the 70S ribosome.

Its function is as follows. Located at the top of the head of the 30S subunit, it contacts several helices of the 16S rRNA. In the 70S ribosome it contacts the 23S rRNA (bridge B1a) and protein L5 of the 50S subunit (bridge B1b), connecting the 2 subunits; these bridges are implicated in subunit movement. Contacts the tRNAs in the A and P-sites. This chain is Small ribosomal subunit protein uS13, found in Paracidovorax citrulli (strain AAC00-1) (Acidovorax citrulli).